Here is a 448-residue protein sequence, read N- to C-terminus: Hyaluronidase conohyal-Cn1 (448 aa).

Positions 1–18 are cleaved as a signal peptide; that stretch reads MRAVVVVTGLVVVVVATA. Residues 19–33 constitute a propeptide that is removed on maturation; it reads LSLPNHDVKSATSSR. The tract at residues 26–55 is disordered; it reads VKSATSSRSSSDYQGSSGDDCDEGLPPPDQ. Low complexity predominate over residues 31-43; it reads SSRSSSDYQGSSG. Cys67 and Cys344 are oxidised to a cystine. N-linked (GlcNAc...) asparagine glycosylation is present at Asn141. Glu151 (proton donor) is an active-site residue. N-linked (GlcNAc...) asparagine glycosylation is found at Asn169 and Asn361. 3 cysteine pairs are disulfide-bonded: Cys369–Cys380, Cys374–Cys413, and Cys415–Cys424. The EGF-like domain occupies 413–424; that stretch reads CRCYSAWEGACC.

This sequence belongs to the glycosyl hydrolase 56 family. In terms of tissue distribution, expressed by the venom duct.

Its subcellular location is the secreted. The enzyme catalyses Random hydrolysis of (1-&gt;4)-linkages between N-acetyl-beta-D-glucosamine and D-glucuronate residues in hyaluronate.. Hyaluronidase catalyzes the hydrolysis of hyaluronic acid (HA), an anionic, nonsulfated glycosaminoglycan distributed widely throughout connective, epithelial, and neural tissues. In venom, they are known to enhance diffusion of the venom by degrading the extracellular matrix. The sequence is that of Hyaluronidase conohyal-Cn1 from Conus consors (Singed cone).